The sequence spans 252 residues: Acyl-coenzyme A diphosphatase FITM2 (252 aa).

The Cytoplasmic portion of the chain corresponds to 1 to 25 (MAAAVAGSLVDKLVCLWRQPYTRIY). Residues 26 to 46 (LPHLFFCISLVGSVLKNAELV) form a helical membrane-spanning segment. Residues 47–59 (PESYFSSSRNVLN) lie on the Lumenal side of the membrane. A helical transmembrane segment spans residues 60–80 (LYFVKVSWGWTIVLLLPFIAY). Over 81–94 (SNFYIKSHMFALRR) the chain is Cytoplasmic. Residues 95–115 (LTSLLVATLVWYICTETFFYI) form a helical membrane-spanning segment. At 116-156 (EDITGSCYESNTMVVIRGEFDTKAACRKAGFFWDGFDISGH) the chain is on the lumenal side. His-156 is an active-site residue. A helical transmembrane segment spans residues 157–177 (SFILSYSSLVIMEEMVPMLHI). Over 178–190 (QPAYRNPPLDCLY) the chain is Cytoplasmic. Residues 191–211 (LALNVIVAIWIWMFGCTSVYF) traverse the membrane as a helical segment. Residue His-212 is part of the active site. Over 212-223 (HDIIDKILGTSC) the chain is Lumenal. The helical transmembrane segment at 224–244 (GILGWYMTYKVWYVKLFSPGL) threads the bilayer. Topologically, residues 245 to 252 (PPQPKQHT) are cytoplasmic.

This sequence belongs to the FIT family. FIT2 subfamily. In terms of tissue distribution, widely expressed.

The protein localises to the endoplasmic reticulum membrane. It carries out the reaction an acyl-CoA + H2O = an acyl-4'-phosphopantetheine + adenosine 3',5'-bisphosphate + 2 H(+). Functionally, fatty acyl-coenzyme A (CoA) diphosphatase that hydrolyzes fatty acyl-CoA to yield acyl-4'-phosphopantetheine and adenosine 3',5'-bisphosphate. Preferentially hydrolyzes unsaturated long-chain acyl-CoA substrates in the endoplasmic reticulum (ER) lumen. This catalytic activity is required for maintaining ER structure and for lipid droplets (LDs) biogenesis, which are lipid storage organelles involved in maintaining lipid and energy homeostasis. Required for lipid droplet accumulation in liver and intestine during embryogenesis. May directly bind to diacylglycerol (DAGs) and triacylglycerol, which is also important for LD biogenesis. May support directional budding of nacent LDs from the ER into the cytosol by reducing DAG levels at sites of LD formation. May play a role in the regulation of cell morphology, ER morphology and cytoskeletal organization. In Danio rerio (Zebrafish), this protein is Acyl-coenzyme A diphosphatase FITM2.